The chain runs to 272 residues: MQWNVPRTVSRLARRTCLEPHNAGLFGRCQNVKGPLLLYNAESKAVLVQGSQKQWLHLSAAQCVAKERRPLDAHPPQPGVLRHKQGKQHVSFRRVFSSNATAQGTPEKKEEPDPLQDKSISLYQRFKKTFRQYGKVLIPVHLITSGVWFGTFYYAALKGVNVVPFLELIGLPDSVVSILKNSQSGNALTAYALFKIATPARYTVTLGGTSVTVKYLRSHGYMSTPPPVKEYLQDRMEETKELITEKMEETKDRLTEKLQETKEKVSFKKKVE.

One can recognise a DUF1279 domain in the interval 117-229 (DKSISLYQRF…GYMSTPPPVK (113 aa)). The chain crosses the membrane as a helical span at residues 136-156 (VLIPVHLITSGVWFGTFYYAA). Residues 229–271 (KEYLQDRMEETKELITEKMEETKDRLTEKLQETKEKVSFKKKV) are a coiled coil. A disordered region spans residues 246–272 (KMEETKDRLTEKLQETKEKVSFKKKVE).

Belongs to the FAM210 family. As to quaternary structure, interacts with ATAD3A.

The protein resides in the membrane. Its subcellular location is the mitochondrion. The protein localises to the cytoplasm. In terms of biological role, may play a role in the structure and strength of both muscle and bone. This is Protein FAM210A (FAM210A) from Pongo abelii (Sumatran orangutan).